Reading from the N-terminus, the 657-residue chain is Chemoreceptor McpA (657 aa).

The Cytoplasmic segment spans residues 1 to 5 (MKRIR). Residues 6–29 (LVDLPLIIKIGFAPAFALLMLAVM) traverse the membrane as a helical segment. Residues 30–188 (AGGAILVQKS…ESESAKRQAQ (159 aa)) are Periplasmic-facing. The chain crosses the membrane as a helical span at residues 189–212 (ATAAMSVTIIMSLLTLGAVGALAF). The Cytoplasmic segment spans residues 213–657 (LTVMTTRKSI…APASDGWEEF (445 aa)). HAMP domains lie at 216 to 269 (MTTR…HLEQ) and 297 to 349 (QEAS…ETMK). A Methyl-accepting transducer domain is found at 354-583 (STDGLSTGAD…QSTAATHSLK (230 aa)). Residue Q378 is modified to Glutamate methyl ester (Gln). Residues E385 and E392 each carry the glutamate methyl ester (Glu) modification. Q574 bears the Glutamate methyl ester (Gln) mark. Residues 634–657 (ARPGRSSGSAALAQAPASDGWEEF) are disordered.

It belongs to the methyl-accepting chemotaxis (MCP) protein family.

The protein localises to the cell membrane. Chemotactic-signal transducers respond to changes in the concentration of attractants and repellents in the environment, transduce a signal from the outside to the inside of the cell, and facilitate sensory adaptation through the variation of the level of methylation. Attractants increase the level of methylation while repellents decrease the level of methylation. In Caulobacter vibrioides (strain ATCC 19089 / CIP 103742 / CB 15) (Caulobacter crescentus), this protein is Chemoreceptor McpA (mcpA).